We begin with the raw amino-acid sequence, 123 residues long: NADH-quinone oxidoreductase subunit A (123 aa).

3 helical membrane passes run 11-31 (YLPI…IMIL), 68-88 (LVAI…PWAI), and 93-113 (IGKI…IGFI).

The protein belongs to the complex I subunit 3 family. NDH-1 is composed of 14 different subunits. Subunits NuoA, H, J, K, L, M, N constitute the membrane sector of the complex.

The protein localises to the cell inner membrane. It carries out the reaction a quinone + NADH + 5 H(+)(in) = a quinol + NAD(+) + 4 H(+)(out). Functionally, NDH-1 shuttles electrons from NADH, via FMN and iron-sulfur (Fe-S) centers, to quinones in the respiratory chain. The immediate electron acceptor for the enzyme in this species is believed to be ubiquinone. Couples the redox reaction to proton translocation (for every two electrons transferred, four hydrogen ions are translocated across the cytoplasmic membrane), and thus conserves the redox energy in a proton gradient. In Rickettsia felis (strain ATCC VR-1525 / URRWXCal2) (Rickettsia azadi), this protein is NADH-quinone oxidoreductase subunit A.